A 436-amino-acid chain; its full sequence is UDP-N-acetylglucosamine 1-carboxyvinyltransferase (436 aa).

22-23 (KN) lines the phosphoenolpyruvate pocket. R96 contacts UDP-N-acetyl-alpha-D-glucosamine. Residue C120 is the Proton donor of the active site. At C120 the chain carries 2-(S-cysteinyl)pyruvic acid O-phosphothioketal. Residues 125-129 (RPIDL), D309, and I331 each bind UDP-N-acetyl-alpha-D-glucosamine.

The protein belongs to the EPSP synthase family. MurA subfamily.

It localises to the cytoplasm. The enzyme catalyses phosphoenolpyruvate + UDP-N-acetyl-alpha-D-glucosamine = UDP-N-acetyl-3-O-(1-carboxyvinyl)-alpha-D-glucosamine + phosphate. It functions in the pathway cell wall biogenesis; peptidoglycan biosynthesis. Functionally, cell wall formation. Adds enolpyruvyl to UDP-N-acetylglucosamine. The sequence is that of UDP-N-acetylglucosamine 1-carboxyvinyltransferase from Acidobacterium capsulatum (strain ATCC 51196 / DSM 11244 / BCRC 80197 / JCM 7670 / NBRC 15755 / NCIMB 13165 / 161).